A 518-amino-acid chain; its full sequence is Cyclin-L2 (518 aa).

Cyclin-like stretches follow at residues 81-183 and 196-280; these read ELIQ…RVLK and KIIV…KILQ. The interval 310–518 is disordered; sequence AKGLLPGTAP…DHPGHSRHRR (209 aa). 5 positions are modified to phosphoserine: Ser328, Ser335, Ser345, Ser348, and Ser366. Positions 382–420 are RS; the sequence is RSREQSYSRSPSRSASPKRRKSDSGSTSGGSKSQSRSRS. Residues 405–427 show a composition bias toward low complexity; the sequence is SGSTSGGSKSQSRSRSRSDSPPR. The span at 438–450 shows a compositional bias: basic and acidic residues; the sequence is SEVRGSRKSKDCK. The span at 455 to 469 shows a compositional bias: basic residues; the sequence is KPHKSRSRSSSRSRS. Basic and acidic residues-rich tracts occupy residues 470-479 and 487-512; these read RSRERTDNSG and YYRD…DHPG.

The protein belongs to the cyclin family. Cyclin L subfamily. As to quaternary structure, interacts with CDK11A, CDK11B, CDK12, CDK13 and POLR2A, the hyperphosphorylated C-terminal domain (CTD) of RNA polymerase II. May form a ternary complex with CDK11B and casein kinase II (CKII). Interacts with pre-mRNA-splicing factors, including at least SRSF1, SRSF2 and SRSF7/SLU7. As to expression, widely expressed (at protein level).

The protein resides in the nucleus speckle. The protein localises to the nucleus. It is found in the nucleoplasm. In terms of biological role, involved in pre-mRNA splicing. May induce cell death, possibly by acting on the transcription and RNA processing of apoptosis-related factors. The protein is Cyclin-L2 (Ccnl2) of Mus musculus (Mouse).